A 75-amino-acid polypeptide reads, in one-letter code: MQYKTFLVISLAYLLVADEAAAFWATLAKGALKLIPTIANAFSSKSKKRREINNVFEPYHENLDLELERFLSQLQ.

An N-terminal signal peptide occupies residues 1 to 22 (MQYKTFLVISLAYLLVADEAAA). Positions 51-75 (EINNVFEPYHENLDLELERFLSQLQ) are excised as a propeptide.

In terms of tissue distribution, expressed by the venom gland.

The protein resides in the secreted. The protein localises to the target cell membrane. Its function is as follows. Amphipathic peptide with probable antimicrobial activity. May act by disrupting the integrity of the bacterial cell membrane. The sequence is that of OcyC3 from Opisthacanthus cayaporum (South American scorpion).